We begin with the raw amino-acid sequence, 252 residues long: Ubiquinone/menaquinone biosynthesis C-methyltransferase UbiE (252 aa).

S-adenosyl-L-methionine is bound by residues Thr-75, Asp-96, and 123 to 124; that span reads NA.

This sequence belongs to the class I-like SAM-binding methyltransferase superfamily. MenG/UbiE family.

It catalyses the reaction a 2-demethylmenaquinol + S-adenosyl-L-methionine = a menaquinol + S-adenosyl-L-homocysteine + H(+). It carries out the reaction a 2-methoxy-6-(all-trans-polyprenyl)benzene-1,4-diol + S-adenosyl-L-methionine = a 5-methoxy-2-methyl-3-(all-trans-polyprenyl)benzene-1,4-diol + S-adenosyl-L-homocysteine + H(+). The protein operates within quinol/quinone metabolism; menaquinone biosynthesis; menaquinol from 1,4-dihydroxy-2-naphthoate: step 2/2. Its pathway is cofactor biosynthesis; ubiquinone biosynthesis. Functionally, methyltransferase required for the conversion of demethylmenaquinol (DMKH2) to menaquinol (MKH2) and the conversion of 2-polyprenyl-6-methoxy-1,4-benzoquinol (DDMQH2) to 2-polyprenyl-3-methyl-6-methoxy-1,4-benzoquinol (DMQH2). This is Ubiquinone/menaquinone biosynthesis C-methyltransferase UbiE from Methylobacterium nodulans (strain LMG 21967 / CNCM I-2342 / ORS 2060).